Reading from the N-terminus, the 133-residue chain is ATP synthase epsilon chain (133 aa).

Belongs to the ATPase epsilon chain family. As to quaternary structure, F-type ATPases have 2 components, CF(1) - the catalytic core - and CF(0) - the membrane proton channel. CF(1) has five subunits: alpha(3), beta(3), gamma(1), delta(1), epsilon(1). CF(0) has three main subunits: a, b and c.

The protein resides in the cell membrane. Functionally, produces ATP from ADP in the presence of a proton gradient across the membrane. The polypeptide is ATP synthase epsilon chain (atpC) (Alkalihalophilus pseudofirmus (strain ATCC BAA-2126 / JCM 17055 / OF4) (Bacillus pseudofirmus)).